The sequence spans 288 residues: Acetyl-coenzyme A carboxylase carboxyl transferase subunit beta (288 aa).

Positions 30-288 constitute a CoA carboxyltransferase N-terminal domain; it reads IMTKCPKCKK…KLHQEVKKDA (259 aa). Cys34, Cys37, Cys53, and Cys56 together coordinate Zn(2+). The segment at 34 to 56 adopts a C4-type zinc-finger fold; sequence CPKCKKIMYTKELNENLNVCFNC.

It belongs to the AccD/PCCB family. Acetyl-CoA carboxylase is a heterohexamer composed of biotin carboxyl carrier protein (AccB), biotin carboxylase (AccC) and two subunits each of ACCase subunit alpha (AccA) and ACCase subunit beta (AccD). Requires Zn(2+) as cofactor.

It is found in the cytoplasm. It carries out the reaction N(6)-carboxybiotinyl-L-lysyl-[protein] + acetyl-CoA = N(6)-biotinyl-L-lysyl-[protein] + malonyl-CoA. Its pathway is lipid metabolism; malonyl-CoA biosynthesis; malonyl-CoA from acetyl-CoA: step 1/1. Its function is as follows. Component of the acetyl coenzyme A carboxylase (ACC) complex. Biotin carboxylase (BC) catalyzes the carboxylation of biotin on its carrier protein (BCCP) and then the CO(2) group is transferred by the transcarboxylase to acetyl-CoA to form malonyl-CoA. In Staphylococcus haemolyticus (strain JCSC1435), this protein is Acetyl-coenzyme A carboxylase carboxyl transferase subunit beta.